Here is a 365-residue protein sequence, read N- to C-terminus: Cobalt-precorrin-5B C(1)-methyltransferase (365 aa).

Belongs to the CbiD family.

It carries out the reaction Co-precorrin-5B + S-adenosyl-L-methionine = Co-precorrin-6A + S-adenosyl-L-homocysteine. The protein operates within cofactor biosynthesis; adenosylcobalamin biosynthesis; cob(II)yrinate a,c-diamide from sirohydrochlorin (anaerobic route): step 6/10. In terms of biological role, catalyzes the methylation of C-1 in cobalt-precorrin-5B to form cobalt-precorrin-6A. This chain is Cobalt-precorrin-5B C(1)-methyltransferase, found in Pseudomonas fluorescens (strain ATCC BAA-477 / NRRL B-23932 / Pf-5).